The following is a 167-amino-acid chain: uncharacterized protein (167 aa).

The chain crosses the membrane as a helical span at residues 4–24 (IIGLFFIIILIVINISILAYD).

The protein localises to the membrane. This is an uncharacterized protein from Rickettsia prowazekii (strain Madrid E).